A 336-amino-acid chain; its full sequence is uncharacterized protein (336 aa).

Belongs to the GppA/Ppx family.

This is an uncharacterized protein from Streptomyces coelicolor (strain ATCC BAA-471 / A3(2) / M145).